The sequence spans 427 residues: Indole diterpene prenyltransferase idtF (427 aa).

6 residues coordinate substrate: Arg-97, Lys-195, Arg-264, Lys-266, Tyr-268, and Tyr-352.

The protein belongs to the tryptophan dimethylallyltransferase family.

It participates in secondary metabolite biosynthesis. In terms of biological role, indole diterpene prenyltransferase; part of the gene cluster that mediates the biosynthesis of paspalitrems, indole-diterpene (IDT) mycotoxins that are potent tremorgens in mammals. The geranylgeranyl diphosphate (GGPP) synthase idtG is proposed to catalyze the first step in IDT biosynthesis via catalysis of a series of iterative condensations of isopentenyl diphosphate (IPP) with dimethylallyl diphosphate (DMAPP), geranyl diphosphate (GPP), and farnesyl diphosphate (FPP), to form GGPP. Condensation of indole-3-glycerol phosphate with GGPP by the prenyltransferase idtC then forms 3-geranylgeranylindole (3-GGI). Epoxidation of the two terminal alkenes of the geranylgeranyl moiety by the FAD-dependent monooxygenase idtM, and cyclization by the terpene cyclase idtB then leads to the production of paspaline. The cytochrome P450 monooxygenase idtP then catalyzes oxidative elimination of the pendant methyl group at C-12 of paspaline and generates the C-10 ketone to yield 13-desoxypaxilline. The cytochrome P450 monooxygenase idtQ may catalyze the C-13 oxidation of 13-desoxypaxilline to afford paxilline. Considering that both paspalicine and paxilline were detected in C.paspali, idtQ also catalyzes the formation of paspalinine from 13-desoxypaxilline via paspalicine as an intermediate. Finally, the alpha-prenyltransferase idtF prenylates paspalinine at the C-20 or the C-21 positions to yield paspalitrems A and C, respectively. The hydroxylation of paspalitrem A at C-32 by a still unknown oxidase affords paspalitrem B. This is Indole diterpene prenyltransferase idtF from Claviceps paspali (Rye ergot fungus).